The following is a 364-amino-acid chain: G-protein coupled receptor 4 (364 aa).

Topologically, residues methionine 1–serine 8 are extracellular. N-linked (GlcNAc...) asparagine glycosylation is present at asparagine 3. The helical transmembrane segment at cysteine 9–glutamine 45 threads the bilayer. 2 cysteine pairs are disulfide-bonded: cysteine 9/cysteine 258 and cysteine 90/cysteine 168. Residues valine 46 to lysine 49 are Cytoplasmic-facing. The helical transmembrane segment at asparagine 50–glutamine 80 threads the bilayer. Residues aspartate 81 to histidine 85 are Extracellular-facing. A helical membrane pass occupies residues glycine 86–histidine 121. Over proline 122–arginine 129 the chain is Cytoplasmic. Residues arginine 130–asparagine 156 form a helical membrane-spanning segment. At glutamate 157–tyrosine 172 the chain is on the extracellular side. The segment at glutamate 157 to tyrosine 172 is extracellular loop 2 (ECL2). Asparagine 164 is a glycosylation site (N-linked (GlcNAc...) asparagine). Residues proline 173–threonine 210 form a helical membrane-spanning segment. Over asparagine 211–threonine 214 the chain is Cytoplasmic. A helical membrane pass occupies residues glutamate 215–valine 250. Over tyrosine 251 to phenylalanine 260 the chain is Extracellular. Residues glutamate 261–alanine 289 traverse the membrane as a helical segment. The Cytoplasmic segment spans residues asparagine 290 to cysteine 364.

It belongs to the G-protein coupled receptor 1 family.

It localises to the cell membrane. Activated by a network of residues that connects an extracellular-facing cavity to Glu-145, a conserved charged residue buried in the transmembrane core of the receptor. Protonation likely drives conformational changes in extracellular loop 2 (ECL2), which stabilizes movement of transmembrane 3 (TM3) and a series of rearrangements that connect the extracellular-facing cavity to Glu-145, a residue only conserved in proton-sensing G-protein coupled receptors. In terms of biological role, proton-sensing G-protein coupled receptor activated by extracellular pH, which is required to monitor pH changes and generate adaptive reactions. Ligand binding causes a conformation change that triggers signaling via guanine nucleotide-binding proteins (G proteins) and modulates the activity of downstream effectors, such as adenylate cyclase. This chain is G-protein coupled receptor 4, found in Callorhinchus milii (Ghost shark).